A 371-amino-acid chain; its full sequence is Putrescine N-methyltransferase 2 (371 aa).

Polar residues-rich tracts occupy residues 1–14 (MEVI…STIF) and 23–70 (GHQN…HDNG). Residues 1 to 70 (MEVISTNTNG…QNGTISHDNG (70 aa)) are disordered. A PABS domain is found at 82-319 (PGWFSEFSAL…GVIGYMLCST (238 aa)). S-adenosyl-L-methionine-binding positions include Gln113, Glu188, and 219 to 220 (DG). Asp238 functions as the Proton acceptor in the catalytic mechanism. Position 307 (Tyr307) interacts with S-adenosyl-L-methionine.

Belongs to the class I-like SAM-binding methyltransferase superfamily. Spermidine/spermine synthase family. In terms of tissue distribution, mainly expressed in roots.

The catalysed reaction is putrescine + S-adenosyl-L-methionine = N-methylputrescine + S-adenosyl-L-homocysteine + H(+). It participates in alkaloid biosynthesis; nicotine biosynthesis. Involved in the biosynthesis of pyridine alkaloid natural products, leading mainly to the production of anabasine, anatabine, nicotine and nornicotine, effective deterrents against herbivores with antiparasitic and pesticide properties (neurotoxins); nornicotine serves as the precursor in the synthesis of the carcinogen compound N'-nitrosonornicotine (NNN). Methyltransferase that mediates the conversion of putrescine to N-methylputrescine. The chain is Putrescine N-methyltransferase 2 from Nicotiana attenuata (Coyote tobacco).